Reading from the N-terminus, the 55-residue chain is Eclosion hormone (55 aa).

It belongs to the insect eclosion hormone family.

The protein localises to the secreted. Its function is as follows. Neuropeptide that triggers the performance of ecdysis behaviors at the end of a molt. It triggers adult behavior patterns: larval, pupal and adult ecdysis, and plasticization during the molt. This is Eclosion hormone from Romalea microptera (Eastern lubber grasshopper).